The primary structure comprises 374 residues: Fatty acid conjugase FAC2 A (374 aa).

Transmembrane regions (helical) follow at residues I50–F70 and I74–G94. Positions H95–H99 match the Histidine box-1 motif. A Histidine box-2 motif is present at residues H131–H135. 3 consecutive transmembrane segments (helical) span residues M168 to F188, V219 to V239, and F246 to L266. Residues H306 to H310 carry the Histidine box-3 motif.

The protein belongs to the fatty acid desaturase type 1 family. As to expression, expressed exclusively in the developing seeds. Not detected in leaves or flower buds.

The protein localises to the microsome membrane. The enzyme catalyses a (9Z,12Z)-octadecadienoyl-containing glycerolipid + AH2 + O2 = a (8E,10E,12Z)-octadecatrienoyl-containing glycerolipid + A + 2 H2O. Its pathway is lipid metabolism; polyunsaturated fatty acid biosynthesis. In terms of biological role, fatty acid conjugase converting 18:2(9Z, 12Z) to calendic acid 18:3(8E, 10E, 12Z). Converts alpha-linolenic acid (18:3(9Z, 12Z, 15Z)) into 18:4(8E, 10E, 12Z, 15Z). Also has weak activity on the mono-unsaturates 16:1(9Z) and 18:1(9Z) producing two conjugated double bonds at delta(8) and delta(10) position. This is Fatty acid conjugase FAC2 A from Calendula officinalis (Pot marigold).